The chain runs to 431 residues: Glutamate-1-semialdehyde 2,1-aminomutase (431 aa).

Lysine 265 is modified (N6-(pyridoxal phosphate)lysine).

It belongs to the class-III pyridoxal-phosphate-dependent aminotransferase family. HemL subfamily. As to quaternary structure, homodimer. Pyridoxal 5'-phosphate serves as cofactor.

It localises to the cytoplasm. It carries out the reaction (S)-4-amino-5-oxopentanoate = 5-aminolevulinate. It participates in porphyrin-containing compound metabolism; protoporphyrin-IX biosynthesis; 5-aminolevulinate from L-glutamyl-tRNA(Glu): step 2/2. The chain is Glutamate-1-semialdehyde 2,1-aminomutase from Vibrio parahaemolyticus serotype O3:K6 (strain RIMD 2210633).